The chain runs to 159 residues: MSAVLAPTVRIQRQDFDVAAEIAALTQGRADVGAVVSFSGLCRDEQGALSALELEHYPGMAEAEIGRIAAEAVERWPLQGLTVIHRHGKIRPGENIVLVVAASAHRQAAFEAANFLMDYLKSRAPFWKKEHRTDGSEGGWVEAKETDTQAAKRWKSSSE.

Residues 41–43, 105–106, Lys121, and 128–130 contribute to the substrate site; these read LCR, HR, and KKE. The segment at 130 to 159 is disordered; sequence EHRTDGSEGGWVEAKETDTQAAKRWKSSSE.

Belongs to the MoaE family. In terms of assembly, heterotetramer of 2 MoaD subunits and 2 MoaE subunits. Also stable as homodimer. The enzyme changes between these two forms during catalysis.

The enzyme catalyses 2 [molybdopterin-synthase sulfur-carrier protein]-C-terminal-Gly-aminoethanethioate + cyclic pyranopterin phosphate + H2O = molybdopterin + 2 [molybdopterin-synthase sulfur-carrier protein]-C-terminal Gly-Gly + 2 H(+). Its pathway is cofactor biosynthesis; molybdopterin biosynthesis. In terms of biological role, converts molybdopterin precursor Z into molybdopterin. This requires the incorporation of two sulfur atoms into precursor Z to generate a dithiolene group. The sulfur is provided by MoaD. This Mesorhizobium japonicum (strain LMG 29417 / CECT 9101 / MAFF 303099) (Mesorhizobium loti (strain MAFF 303099)) protein is Molybdopterin synthase catalytic subunit (moaE).